Here is a 401-residue protein sequence, read N- to C-terminus: Glutamyl-tRNA reductase (401 aa).

Substrate contacts are provided by residues 45-48, Ser101, 106-108, and Gln112; these read TCNR and EDQ. The Nucleophile role is filled by Cys46. An NADP(+)-binding site is contributed by 177–182; the sequence is GYGDVG.

Belongs to the glutamyl-tRNA reductase family. In terms of assembly, homodimer.

It catalyses the reaction (S)-4-amino-5-oxopentanoate + tRNA(Glu) + NADP(+) = L-glutamyl-tRNA(Glu) + NADPH + H(+). The protein operates within porphyrin-containing compound metabolism; protoporphyrin-IX biosynthesis; 5-aminolevulinate from L-glutamyl-tRNA(Glu): step 1/2. In terms of biological role, catalyzes the NADPH-dependent reduction of glutamyl-tRNA(Glu) to glutamate 1-semialdehyde (GSA). The polypeptide is Glutamyl-tRNA reductase (Clostridium botulinum (strain Eklund 17B / Type B)).